The chain runs to 615 residues: 1-deoxy-D-xylulose-5-phosphate synthase (615 aa).

Thiamine diphosphate is bound by residues His72 and 111-113; that span reads GHS. Asp142 is a binding site for Mg(2+). Thiamine diphosphate contacts are provided by residues 143–144, Asn171, Tyr278, and Glu360; that span reads GA. Mg(2+) is bound at residue Asn171.

Belongs to the transketolase family. DXPS subfamily. In terms of assembly, homodimer. The cofactor is Mg(2+). Thiamine diphosphate is required as a cofactor.

The catalysed reaction is D-glyceraldehyde 3-phosphate + pyruvate + H(+) = 1-deoxy-D-xylulose 5-phosphate + CO2. Its pathway is metabolic intermediate biosynthesis; 1-deoxy-D-xylulose 5-phosphate biosynthesis; 1-deoxy-D-xylulose 5-phosphate from D-glyceraldehyde 3-phosphate and pyruvate: step 1/1. Catalyzes the acyloin condensation reaction between C atoms 2 and 3 of pyruvate and glyceraldehyde 3-phosphate to yield 1-deoxy-D-xylulose-5-phosphate (DXP). The sequence is that of 1-deoxy-D-xylulose-5-phosphate synthase from Campylobacter jejuni subsp. jejuni serotype O:23/36 (strain 81-176).